Reading from the N-terminus, the 404-residue chain is Cysteine desulfurase IscS (404 aa).

Residues 75–76 (AT), Asn-155, Gln-183, and 203–205 (SAH) each bind pyridoxal 5'-phosphate. At Lys-206 the chain carries N6-(pyridoxal phosphate)lysine. Thr-243 serves as a coordination point for pyridoxal 5'-phosphate. The Cysteine persulfide intermediate role is filled by Cys-328. Cys-328 contributes to the [2Fe-2S] cluster binding site.

Belongs to the class-V pyridoxal-phosphate-dependent aminotransferase family. NifS/IscS subfamily. As to quaternary structure, homodimer. Forms a heterotetramer with IscU, probably interacts with other sulfur acceptors. Pyridoxal 5'-phosphate serves as cofactor.

The protein resides in the cytoplasm. The catalysed reaction is (sulfur carrier)-H + L-cysteine = (sulfur carrier)-SH + L-alanine. It functions in the pathway cofactor biosynthesis; iron-sulfur cluster biosynthesis. With respect to regulation, inhibited by equimolar N-iodoacetyl-N'-(5-sulfo-1-naphthyl)ethylenediamine. Master enzyme that delivers sulfur to a number of partners involved in Fe-S cluster assembly, tRNA modification or cofactor biosynthesis. Catalyzes the removal of elemental sulfur from cysteine to produce alanine via an enzyme-bound persulfide intermediate. Functions as a sulfur delivery protein for Fe-S cluster synthesis. Cluster assembly on IscU homodimers proceeds sequentially from 1 2Fe-2S per dimer, to 2 2Fe-2S per dimer and finally 1 4Fe-4S per dimer. In Azotobacter vinelandii, this protein is Cysteine desulfurase IscS.